The primary structure comprises 1355 residues: MGTPSHELNTTSSGAEVIQKTLEEGLGRRICVAQPVPFVPQVLGVMIGAGVAVLVTAVLILLVVRRLRVQKTPAPEGPRYRFRKRDKVLFYGRKIMRKVSQSTSSLVDTSVSTTSRPRMKKKLKMLNIAKKILRIQKETPTLQRKEPPPSVLEADLTEGDLANSHLPSEVLYMLKNVRVLGHFEKPLFLELCRHMVFQRLGQGDYVFRPGQPDASIYVVQDGLLELCLPGPDGKECVVKEVVPGDSVNSLLSILDVITGHQHPQRTVSARAARDSTVLRLPVEAFSAVFTKYPESLVRVVQIIMVRLQRVTFLALHNYLGLTNELFSHEIQPLRLFPSPGLPTRTSPVRGSKRVVSTSGTEDTSKETSGRPLDSIGAPLPGPAGDPVKPTSLEAPPAPLLSRCISMPVDISGLQGGPRSDFDMAYERGRISVSLQEEASGGPQTASPRELREQPAGACEYSYCEDESATGGCPFGPYQGRQTSSIFEAAKRELAKLMRIEDPSLLNSRVLLHHAKAGTIIARQGDQDVSLHFVLWGCLHVYQRMIDKAEEVCLFVAQPGELVGQLAVLTGEPLIFTLRAQRDCTFLRISKSHFYEIMRAQPSVVLSAAHTVAARMSPFVRQMDFAIDWTAVEAGRALYRQGDRSDCTYIVLNGRLRSVIQRGSGKKELVGEYGRGDLIGVVEALTRQPRATTVHAVRDTELAKLPEGTLGHIKRRYPQVVTRLIHLLSQKILGNLQQLQGPFPGSGLSVPQHSELTNPASNLSTVAILPVCAEVPMMAFTLELQHALQAIGPTLLLNSDVIRALLGASALDSIQEFRLSGWLAQQEDAHRIVLYQTDTSLTPWTVRCLRQADCILIVGLGDQEPTVGQLEQMLENTAVRALKQLVLLHREEGPGPTRTVEWLNMRSWCSGHLHLRCPRRLFSRRSPAKLHELYEKVFSRRADRHSDFSRLARVLTGNTIALVLGGGGARGCSHIGVLKALEEAGVPVDLVGGTSIGSFIGALYAEERSASRTKQRAREWAKSMTSVLEPVLDLTYPVTSMFTGSAFNRSIHRVFQDKQIEDLWLPYFNVTTDITASAMRVHKDGSLWRYVRASMTLSGYLPPLCDPKDGHLLMDGGYINNLPADIARSMGAKTVIAIDVGSQDETDLSTYGDSLSGWWLLWKRLNPWADKVKVPDMAEIQSRLAYVSCVRQLEVVKSSSYCEYLRPSIDCFKTMDFGKFDQIYDVGYQYGKAVFGGWTRGEVIEKMLTDRRSTDLNESRRADILAFPSSGFTDLAEIVSRIEPPTSYVSDGCADGEESDCLTEYEEDAGPDCSRDEGGSPEGASPSTASEVEEEKSTLRQRRFLPQETPSSVADA.

The Lumenal portion of the chain corresponds to 1-43 (MGTPSHELNTTSSGAEVIQKTLEEGLGRRICVAQPVPFVPQVL). A glycan (N-linked (GlcNAc...) asparagine) is linked at asparagine 9. The helical transmembrane segment at 44–64 (GVMIGAGVAVLVTAVLILLVV) threads the bilayer. Over 65–1355 (RRLRVQKTPA…QETPSSVADA (1291 aa)) the chain is Cytoplasmic. Residue 179 to 306 (VLGHFEKPLF…VRVVQIIMVR (128 aa)) coordinates a nucleoside 3',5'-cyclic phosphate. Phosphoserine is present on serine 338. The disordered stretch occupies residues 338-395 (SPGLPTRTSPVRGSKRVVSTSGTEDTSKETSGRPLDSIGAPLPGPAGDPVKPTSLEAP). Residues 343–361 (TRTSPVRGSKRVVSTSGTE) show a composition bias toward polar residues. Threonine 345 is modified (phosphothreonine). Phosphoserine is present on residues serine 346, serine 356, and serine 405. A nucleoside 3',5'-cyclic phosphate contacts are provided by residues 492 to 614 (ELAK…VAAR) and 610 to 730 (TVAA…LSQK). Residues 961 to 1127 (LVLGGGGARG…INNLPADIAR (167 aa)) enclose the PNPLA domain. A GXGXXG motif is present at residues 965-970 (GGGARG). Positions 992–996 (GTSIG) match the GXSXG motif. Serine 994 (nucleophile) is an active-site residue. The active-site Proton acceptor is the aspartate 1114. A DGA/G motif is present at residues 1114–1116 (DGG). The segment at 1286–1355 (SYVSDGCADG…QETPSSVADA (70 aa)) is disordered. The span at 1293–1309 (ADGEESDCLTEYEEDAG) shows a compositional bias: acidic residues.

It belongs to the NTE family. Glycosylated. In terms of tissue distribution, expressed in brain, testes and kidney (at protein level). Expressed ubiquitously in brain of young mice. Reaching adulthood, there is a most prominent expression in Purkinje cells, granule cells and pyramidal neurons of the hippocampus and some large neurons in the medulla oblongata, nucleus dentatus and pons.

It is found in the endoplasmic reticulum membrane. It catalyses the reaction a 1-acyl-sn-glycero-3-phosphocholine + H2O = sn-glycerol 3-phosphocholine + a fatty acid + H(+). The catalysed reaction is 1-hexadecanoyl-sn-glycero-3-phosphocholine + H2O = sn-glycerol 3-phosphocholine + hexadecanoate + H(+). It carries out the reaction 1-hexadecanoyl-sn-glycero-3-phosphate + H2O = sn-glycerol 3-phosphate + hexadecanoate + H(+). The enzyme catalyses 1-(9Z-octadecenoyl)-sn-glycero-3-phosphocholine + H2O = sn-glycerol 3-phosphocholine + (9Z)-octadecenoate + H(+). It catalyses the reaction 1-hexadecanoylglycerol + H2O = glycerol + hexadecanoate + H(+). The catalysed reaction is 2-hexadecanoylglycerol + H2O = glycerol + hexadecanoate + H(+). It carries out the reaction 1-(9Z-octadecenoyl)-glycerol + H2O = glycerol + (9Z)-octadecenoate + H(+). The enzyme catalyses 2-(9Z-octadecenoyl)-glycerol + H2O = glycerol + (9Z)-octadecenoate + H(+). It catalyses the reaction 2-(5Z,8Z,11Z,14Z-eicosatetraenoyl)-glycerol + H2O = glycerol + (5Z,8Z,11Z,14Z)-eicosatetraenoate + H(+). Inhibited by a series a OPs such as mipafox (MPX), phenyl saligenin phosphate (PSP), phenyl dipentyl phosphinate (PDPP), diisopropyl fluorophosphate and paraoxon. In terms of biological role, phospholipase B that deacylates intracellular phosphatidylcholine (PtdCho), generating glycerophosphocholine (GroPtdCho). This deacylation occurs at both sn-2 and sn-1 positions of PtdCho. Catalyzes the hydrolysis of several naturally occurring membrane-associated lipids. Hydrolyzes lysophospholipids and monoacylglycerols, preferring the 1-acyl to the 2-acyl isomer. Does not catalyze hydrolysis of di- or triacylglycerols or fatty acid amides. The polypeptide is Patatin-like phospholipase domain-containing protein 6 (Pnpla6) (Mus musculus (Mouse)).